The chain runs to 445 residues: Sensor protein kinase CarS (445 aa).

The first 24 residues, 1–24 (MRSIQRRLSVGLFAVLLVVGLVLA), serve as a signal peptide directing secretion. Residues 150 to 170 (FARVQWMGLGAGALALLLVLL) form a helical membrane-spanning segment. The region spanning 177–228 (RRSLRPLEEVRLQIAQLQQGQRSQLDNQAPEELEPLVEQINHLLAHTEETLK) is the HAMP domain. One can recognise a Histidine kinase domain in the interval 236 to 438 (NLGHALKTPL…RVSVELPLQK (203 aa)). A Phosphohistidine; by autocatalysis modification is found at His-239.

It localises to the membrane. The enzyme catalyses ATP + protein L-histidine = ADP + protein N-phospho-L-histidine.. Member of the two-component regulatory system CarS/CarR that regulates the expression of multiple genes involved in calcium signaling and homeostasis including CarO and CarP. May function as a membrane-associated protein kinase that phosphorylates CarR in response to environmental signals leading to activation of specific gene promoters. The chain is Sensor protein kinase CarS (carS) from Pseudomonas aeruginosa (strain ATCC 15692 / DSM 22644 / CIP 104116 / JCM 14847 / LMG 12228 / 1C / PRS 101 / PAO1).